A 175-amino-acid polypeptide reads, in one-letter code: Alkyl hydroperoxide reductase AhpD (175 aa).

Residue cysteine 131 is the Proton donor of the active site. A disulfide bridge connects residues cysteine 131 and cysteine 134. Cysteine 134 (cysteine sulfenic acid (-SOH) intermediate) is an active-site residue.

Belongs to the AhpD family.

The enzyme catalyses N(6)-[(R)-dihydrolipoyl]-L-lysyl-[lipoyl-carrier protein] + a hydroperoxide = N(6)-[(R)-lipoyl]-L-lysyl-[lipoyl-carrier protein] + an alcohol + H2O. In terms of biological role, antioxidant protein with alkyl hydroperoxidase activity. Required for the reduction of the AhpC active site cysteine residues and for the regeneration of the AhpC enzyme activity. The protein is Alkyl hydroperoxide reductase AhpD of Brucella melitensis biotype 1 (strain ATCC 23456 / CCUG 17765 / NCTC 10094 / 16M).